The sequence spans 310 residues: UPF0761 membrane protein VFMJ11_0098 (310 aa).

A run of 6 helical transmembrane segments spans residues 34–54 (YMAY…LSVL), 97–117 (MTAV…SSID), 136–156 (FSLY…SLAA), 178–198 (LLGW…YLLV), 207–227 (HALI…VGFA), and 242–262 (ALAA…IVLI).

It belongs to the UPF0761 family.

It is found in the cell inner membrane. The protein is UPF0761 membrane protein VFMJ11_0098 of Aliivibrio fischeri (strain MJ11) (Vibrio fischeri).